The chain runs to 389 residues: Succinate--CoA ligase [ADP-forming] subunit beta (389 aa).

One can recognise an ATP-grasp domain in the interval K9–E244. ATP contacts are provided by residues K46, G53–G55, E99, S102, and E107. Mg(2+) contacts are provided by N199 and D213. Substrate-binding positions include N264 and G321–M323.

The protein belongs to the succinate/malate CoA ligase beta subunit family. In terms of assembly, heterotetramer of two alpha and two beta subunits. Mg(2+) is required as a cofactor.

It carries out the reaction succinate + ATP + CoA = succinyl-CoA + ADP + phosphate. The enzyme catalyses GTP + succinate + CoA = succinyl-CoA + GDP + phosphate. It participates in carbohydrate metabolism; tricarboxylic acid cycle; succinate from succinyl-CoA (ligase route): step 1/1. Succinyl-CoA synthetase functions in the citric acid cycle (TCA), coupling the hydrolysis of succinyl-CoA to the synthesis of either ATP or GTP and thus represents the only step of substrate-level phosphorylation in the TCA. The beta subunit provides nucleotide specificity of the enzyme and binds the substrate succinate, while the binding sites for coenzyme A and phosphate are found in the alpha subunit. The chain is Succinate--CoA ligase [ADP-forming] subunit beta from Parvibaculum lavamentivorans (strain DS-1 / DSM 13023 / NCIMB 13966).